Reading from the N-terminus, the 381-residue chain is Cytochrome b (381 aa).

Helical transmembrane passes span 33 to 53, 77 to 98, 113 to 133, and 178 to 198; these read FGSL…FLAM, WLIR…FLHV, WNIG…GYVL, and FFAL…VHLT. His-83 and His-97 together coordinate heme b. Heme b contacts are provided by His-182 and His-196. Position 201 (His-201) interacts with a ubiquinone. A run of 4 helical transmembrane segments spans residues 226–246, 288–308, 320–340, and 347–367; these read IKDI…ALFS, LGGV…PFLH, ISQT…WIGG, and FIII…HPMP.

It belongs to the cytochrome b family. As to quaternary structure, the cytochrome bc1 complex contains 11 subunits: 3 respiratory subunits (MT-CYB, CYC1 and UQCRFS1), 2 core proteins (UQCRC1 and UQCRC2) and 6 low-molecular weight proteins (UQCRH/QCR6, UQCRB/QCR7, UQCRQ/QCR8, UQCR10/QCR9, UQCR11/QCR10 and a cleavage product of UQCRFS1). This cytochrome bc1 complex then forms a dimer. The cofactor is heme b.

The protein localises to the mitochondrion inner membrane. Component of the ubiquinol-cytochrome c reductase complex (complex III or cytochrome b-c1 complex) that is part of the mitochondrial respiratory chain. The b-c1 complex mediates electron transfer from ubiquinol to cytochrome c. Contributes to the generation of a proton gradient across the mitochondrial membrane that is then used for ATP synthesis. This is Cytochrome b (MT-CYB) from Sminthopsis youngsoni (Lesser hairy-footed dunnart).